The following is a 633-amino-acid chain: Threonine--tRNA ligase (633 aa).

The region spanning 1–61 is the TGS domain; sequence MINITLPDGS…DHDASLRIIT (61 aa). A catalytic region spans residues 243 to 534; sequence DHRRIGKQQD…LIEHHAGQFP (292 aa). Positions 334, 385, and 511 each coordinate Zn(2+).

This sequence belongs to the class-II aminoacyl-tRNA synthetase family. As to quaternary structure, homodimer. It depends on Zn(2+) as a cofactor.

It is found in the cytoplasm. The catalysed reaction is tRNA(Thr) + L-threonine + ATP = L-threonyl-tRNA(Thr) + AMP + diphosphate + H(+). Its function is as follows. Catalyzes the attachment of threonine to tRNA(Thr) in a two-step reaction: L-threonine is first activated by ATP to form Thr-AMP and then transferred to the acceptor end of tRNA(Thr). Also edits incorrectly charged L-seryl-tRNA(Thr). The polypeptide is Threonine--tRNA ligase (Stenotrophomonas maltophilia (strain R551-3)).